The following is a 1850-amino-acid chain: Chitin synthase V (1850 aa).

A disordered region spans residues 1–27 (MASTLPPLGGGNGGPHTQHSLPSLPAH). The 779-residue stretch at 1–779 (MASTLPPLGG…EIAGLVDGSA (779 aa)) folds into the Myosin motor domain. 105–112 (GESGSGKS) lines the ATP pocket. N-linked (GlcNAc...) asparagine glycans are attached at residues asparagine 245, asparagine 290, asparagine 427, asparagine 481, and asparagine 558. Residues 289–309 (NNTSATGDDSGGFSHEGGQTS) form a disordered region. A disordered region spans residues 593–647 (SKPMRAPSVMSRKGGRGRGIASQRRQQESNLFDSGNTHAESRSPKGGNKGGIDQG). A compositionally biased stretch (polar residues) spans 620–630 (ESNLFDSGNTH). The interval 656–680 (LDNVQKAVTDPGTNAYFVFCLKPND) is actin-binding. 2 helical membrane passes run 884–904 (WVFTVYFLTWFIPDFLIRWIG) and 923–943 (MLIWFMCLVAAFFIVVFPMLI). Residues 947–1006 (QNVFSAAELSSHNGKDGNSAYVSIRGHVIDLGSFADRHYPSFVSRKTMLNYAGMDVSSLF) form the Cytochrome b5 heme-binding domain. N-linked (GlcNAc...) asparagine glycosylation is found at asparagine 1033, asparagine 1058, and asparagine 1186. A helical membrane pass occupies residues 1196 to 1216 (LVLAVSILLVSVIAFKFFAAL). 2 N-linked (GlcNAc...) asparagine glycosylation sites follow: asparagine 1453 and asparagine 1559. The next 4 membrane-spanning stretches (helical) occupy residues 1568–1588 (LIPMAQLCGFCCFSMRFVVFI), 1590–1610 (LLSTVVQPVTIAYIVYLIVLV), 1617–1637 (VPITAFILLGAIYGLQAIIFI), and 1644–1664 (MVGWMILYVMAVPVFSFGLPL). The N-linked (GlcNAc...) asparagine glycan is linked to asparagine 1767. The 51-residue stretch at 1800 to 1850 (LPSDDALLAEIRDILKTADLMTVTKKGIKQELERRFDVPLDAKRAYINSGK) folds into the DEK-C domain.

In the N-terminal section; belongs to the TRAFAC class myosin-kinesin ATPase superfamily. Myosin family. The protein in the C-terminal section; belongs to the chitin synthase family. Class V subfamily. Expressed in conidia and during appressorium formation.

The protein resides in the cell membrane. It is found in the cell septum. The protein localises to the cell tip. The catalysed reaction is [(1-&gt;4)-N-acetyl-beta-D-glucosaminyl](n) + UDP-N-acetyl-alpha-D-glucosamine = [(1-&gt;4)-N-acetyl-beta-D-glucosaminyl](n+1) + UDP + H(+). Polymerizes chitin, a structural polymer of the cell wall and septum, by transferring the sugar moiety of UDP-GlcNAc to the non-reducing end of the growing chitin polymer. Contributes to the production of conidia and the ability of fungal conidia to germinate. Involved in the fungal cell wall integrity and the ability of conidia to withstand biophysical pressure. Required for appressorium formation and evasion of insect cellular and/or humoral defenses, promoting the fungal dimorphic transition to the production of hyphal bodies that occurs within hosts, and ultimately to virulence. This Metarhizium acridum (strain CQMa 102) protein is Chitin synthase V.